Consider the following 290-residue polypeptide: UPF0761 membrane protein YihY (290 aa).

6 helical membrane-spanning segments follow: residues leucine 44–phenylalanine 64, valine 104–leucine 124, phenylalanine 140–isoleucine 160, isoleucine 183–isoleucine 203, alanine 210–leucine 230, and valine 244–leucine 264.

This sequence belongs to the UPF0761 family.

It is found in the cell inner membrane. The chain is UPF0761 membrane protein YihY from Shigella sonnei (strain Ss046).